We begin with the raw amino-acid sequence, 322 residues long: Acetyl-coenzyme A carboxylase carboxyl transferase subunit beta (322 aa).

Residues 24-293 (LWIKCPDTGQ…PAVEEPAVVD (270 aa)) enclose the CoA carboxyltransferase N-terminal domain.

The protein belongs to the AccD/PCCB family. In terms of assembly, acetyl-CoA carboxylase is a heterohexamer composed of biotin carboxyl carrier protein (AccB), biotin carboxylase (AccC) and two subunits each of ACCase subunit alpha (AccA) and ACCase subunit beta (AccD).

Its subcellular location is the cytoplasm. The enzyme catalyses N(6)-carboxybiotinyl-L-lysyl-[protein] + acetyl-CoA = N(6)-biotinyl-L-lysyl-[protein] + malonyl-CoA. The protein operates within lipid metabolism; malonyl-CoA biosynthesis; malonyl-CoA from acetyl-CoA: step 1/1. Component of the acetyl coenzyme A carboxylase (ACC) complex. Biotin carboxylase (BC) catalyzes the carboxylation of biotin on its carrier protein (BCCP) and then the CO(2) group is transferred by the transcarboxylase to acetyl-CoA to form malonyl-CoA. In Rhodopseudomonas palustris (strain HaA2), this protein is Acetyl-coenzyme A carboxylase carboxyl transferase subunit beta.